A 443-amino-acid chain; its full sequence is Probable glycine dehydrogenase (decarboxylating) subunit 1 (443 aa).

The protein belongs to the GcvP family. N-terminal subunit subfamily. As to quaternary structure, the glycine cleavage system is composed of four proteins: P, T, L and H. In this organism, the P 'protein' is a heterodimer of two subunits.

It catalyses the reaction N(6)-[(R)-lipoyl]-L-lysyl-[glycine-cleavage complex H protein] + glycine + H(+) = N(6)-[(R)-S(8)-aminomethyldihydrolipoyl]-L-lysyl-[glycine-cleavage complex H protein] + CO2. Its function is as follows. The glycine cleavage system catalyzes the degradation of glycine. The P protein binds the alpha-amino group of glycine through its pyridoxal phosphate cofactor; CO(2) is released and the remaining methylamine moiety is then transferred to the lipoamide cofactor of the H protein. This Nitratidesulfovibrio vulgaris (strain DP4) (Desulfovibrio vulgaris) protein is Probable glycine dehydrogenase (decarboxylating) subunit 1.